We begin with the raw amino-acid sequence, 121 residues long: MTRRNDKSNPRLAELIRLLKQTSRENEVEIWSDIASRLEKSRKNYAEVNVSKINRYAQEGETLIVPGKVLGSGVVEAGVTVAALSFSDAAVSKITEAKGQCISIEQLLSQNPKGSRTRILR.

Belongs to the eukaryotic ribosomal protein eL18 family.

In Methanospirillum hungatei JF-1 (strain ATCC 27890 / DSM 864 / NBRC 100397 / JF-1), this protein is Large ribosomal subunit protein eL18.